The following is a 371-amino-acid chain: ATP-dependent protease ATP-binding subunit-like protein AmiB (371 aa).

96–103 contacts ATP; sequence GPTGVGKT.

The protein belongs to the ClpX chaperone family. Mg(2+) is required as a cofactor.

Unlikely to encode a regulatory protein. Has ATPase activity. AmiB and AmiS may act jointly into a two component ABC transporter system. This chain is ATP-dependent protease ATP-binding subunit-like protein AmiB (amiB), found in Pseudomonas aeruginosa (strain ATCC 15692 / DSM 22644 / CIP 104116 / JCM 14847 / LMG 12228 / 1C / PRS 101 / PAO1).